The chain runs to 486 residues: 23S rRNA (uracil(1939)-C(5))-methyltransferase RlmD (486 aa).

One can recognise a TRAM domain in the interval 14–76 (AAQDGSGLPE…NHWEQANLTA (63 aa)). Positions 89, 99, 102, and 181 each coordinate [4Fe-4S] cluster. Residues Q289, F318, N323, E339, N374, and D395 each coordinate S-adenosyl-L-methionine. Catalysis depends on C442, which acts as the Nucleophile.

This sequence belongs to the class I-like SAM-binding methyltransferase superfamily. RNA M5U methyltransferase family. RlmD subfamily.

It catalyses the reaction uridine(1939) in 23S rRNA + S-adenosyl-L-methionine = 5-methyluridine(1939) in 23S rRNA + S-adenosyl-L-homocysteine + H(+). Catalyzes the formation of 5-methyl-uridine at position 1939 (m5U1939) in 23S rRNA. The protein is 23S rRNA (uracil(1939)-C(5))-methyltransferase RlmD of Verminephrobacter eiseniae (strain EF01-2).